A 483-amino-acid chain; its full sequence is Regulatory protein ViaA (483 aa).

It belongs to the ViaA family. As to quaternary structure, homodimer. Interacts with RavA.

The protein resides in the cytoplasm. Component of the RavA-ViaA chaperone complex, which may act on the membrane to optimize the function of some of the respiratory chains. ViaA stimulates the ATPase activity of RavA. The sequence is that of Regulatory protein ViaA from Escherichia coli O9:H4 (strain HS).